We begin with the raw amino-acid sequence, 514 residues long: MNTRNTRSKQRAPFGVSSSVKPRLDLIEQAPNPAYDRHPACITLPERTCRHPLTDLEANEQLGRCEDSVKNRFDRVIPFLQVVAGIPLGLDYVTRVQELAQSSLGHTLPEELLKDNWISGHNLKGIFGYATAKALTAATEQFSRKIMSEKDDSASAIGFFLDCGFHAVDISPCADGRLKGLLPYILRLPLTAFTYRKAYAGSMFDIEDDLAQWEKNELRRYREGVPNTADQPTRYLKIAVYHFSTSDPTHSGCAAHGSNDRAALEAALTQLMKFREAVENAHCCGASIDILLIGVDTDTDAIRVHIPDSKGFLNPYRYVDNTVTYAQTLHLAPDEARVIIHEAILNANRSDGWAKGNGVASEGMRRFIGQLLINNLSQIDYVVNRHGGRYPPNDIGHAERYISVGDGFDEVQIRNLAYYAHLDTVEENAIDVDVGIKIFTKLNLSRGLPIPIAIHYRYDPNVPGSRERTVVKARRIYNAIKERFSSLDEQNLLQFRLSVQAQDIGSPIEEVASA.

The N-terminal domain stretch occupies residues 1–144 (MNTRNTRSKQ…LTAATEQFSR (144 aa)). The segment at 151 to 397 (DDSASAIGFF…GRYPPNDIGH (247 aa)) is catalytic domain. Residue C173 coordinates Zn(2+). D175 serves as the catalytic Proton acceptor. 2 residues coordinate Zn(2+): H242 and C253. The tract at residues 398 to 514 (AERYISVGDG…GSPIEEVASA (117 aa)) is C-terminal domain.

It belongs to the beta-class carbonic anhydrase family. CsoSCA subfamily. As to quaternary structure, homodimer, may form filaments. Zn(2+) serves as cofactor.

It localises to the carboxysome. It catalyses the reaction hydrogencarbonate + H(+) = CO2 + H2O. With respect to regulation, carbonic anhydrase activity is inhibited by ethoxyzolamide, dithiothreitol, cyanide, and divalent metal chelators dipicolinic acid and nitrilotriacetic acid. Reversible hydration of carbon dioxide. Essential for chemolithotrophic carbon dioxide fixation, supplies CO(2) to RuBisCO (ribulose bisphosphate carboxylase, cbbL-cbbS) in the carboxysome. There are estimated to be 40 CsoSCA dimers per carboxysome. Its function is as follows. Unlike beta-carboxysomes, alpha-carboxysomes (Cb) can form without cargo protein. CsoS2 is essential for Cb formation and is also capable of targeting foreign proteins to the Cb. The Cb shell assembles with the aid of CsoS2; CsoS1A, CsoS1B and CsoS1C form the majority of the shell while CsoS4A and CsoS4B form vertices. CsoS1D forms pseudohexamers that probably control metabolite flux into and out of the shell. The chain is Carboxysome shell carbonic anhydrase from Halothiobacillus neapolitanus (strain ATCC 23641 / c2) (Thiobacillus neapolitanus).